A 298-amino-acid polypeptide reads, in one-letter code: Ribosomal RNA small subunit methyltransferase A (298 aa).

6 residues coordinate S-adenosyl-L-methionine: N35, L37, G62, E83, D108, and N133.

Belongs to the class I-like SAM-binding methyltransferase superfamily. rRNA adenine N(6)-methyltransferase family. RsmA subfamily.

The protein resides in the cytoplasm. It carries out the reaction adenosine(1518)/adenosine(1519) in 16S rRNA + 4 S-adenosyl-L-methionine = N(6)-dimethyladenosine(1518)/N(6)-dimethyladenosine(1519) in 16S rRNA + 4 S-adenosyl-L-homocysteine + 4 H(+). Specifically dimethylates two adjacent adenosines (A1518 and A1519) in the loop of a conserved hairpin near the 3'-end of 16S rRNA in the 30S particle. May play a critical role in biogenesis of 30S subunits. The polypeptide is Ribosomal RNA small subunit methyltransferase A (Streptococcus pyogenes serotype M12 (strain MGAS9429)).